The primary structure comprises 371 residues: Germination protease (371 aa).

A propeptide spanning residues 1–16 (MEKQKLDLSAYQIRTD) is cleaved from the precursor.

It belongs to the peptidase A25 family. In terms of assembly, homotetramer. In terms of processing, autoproteolytically processed. The inactive tetrameric zymogen termed p46 autoprocesses to a smaller form termed p41, which is active only during spore germination.

It catalyses the reaction Endopeptidase action with P4 Glu or Asp, P1 preferably Glu &gt; Asp, P1' hydrophobic and P2' Ala.. Initiates the rapid degradation of small, acid-soluble proteins during spore germination. The protein is Germination protease of Bacillus pumilus (strain SAFR-032).